We begin with the raw amino-acid sequence, 900 residues long: Alanine--tRNA ligase (900 aa).

Zn(2+) is bound by residues His-604, His-608, Cys-708, and His-712.

This sequence belongs to the class-II aminoacyl-tRNA synthetase family. Zn(2+) serves as cofactor.

It localises to the cytoplasm. The enzyme catalyses tRNA(Ala) + L-alanine + ATP = L-alanyl-tRNA(Ala) + AMP + diphosphate. In terms of biological role, catalyzes the attachment of alanine to tRNA(Ala) in a two-step reaction: alanine is first activated by ATP to form Ala-AMP and then transferred to the acceptor end of tRNA(Ala). Also edits incorrectly charged Ser-tRNA(Ala) and Gly-tRNA(Ala) via its editing domain. The protein is Alanine--tRNA ligase of Saccharolobus islandicus (strain Y.G.57.14 / Yellowstone #1) (Sulfolobus islandicus).